The primary structure comprises 714 residues: Fatty acid oxidation complex subunit alpha (714 aa).

The enoyl-CoA hydratase stretch occupies residues 1–190 (MEMASVFTLN…KLGLVDDVVP (190 aa)). The tract at residues 306-714 (APLNSVGILG…FWKTTATDLQ (409 aa)) is 3-hydroxyacyl-CoA dehydrogenase.

In the N-terminal section; belongs to the enoyl-CoA hydratase/isomerase family. It in the central section; belongs to the 3-hydroxyacyl-CoA dehydrogenase family. As to quaternary structure, heterotetramer of two alpha chains (FadJ) and two beta chains (FadI).

The protein localises to the cytoplasm. It carries out the reaction a (3S)-3-hydroxyacyl-CoA = a (2E)-enoyl-CoA + H2O. The catalysed reaction is a 4-saturated-(3S)-3-hydroxyacyl-CoA = a (3E)-enoyl-CoA + H2O. It catalyses the reaction a (3S)-3-hydroxyacyl-CoA + NAD(+) = a 3-oxoacyl-CoA + NADH + H(+). The enzyme catalyses (3S)-3-hydroxybutanoyl-CoA = (3R)-3-hydroxybutanoyl-CoA. It functions in the pathway lipid metabolism; fatty acid beta-oxidation. Catalyzes the formation of a hydroxyacyl-CoA by addition of water on enoyl-CoA. Also exhibits 3-hydroxyacyl-CoA epimerase and 3-hydroxyacyl-CoA dehydrogenase activities. This chain is Fatty acid oxidation complex subunit alpha, found in Escherichia coli O139:H28 (strain E24377A / ETEC).